Here is a 662-residue protein sequence, read N- to C-terminus: Probable quinol oxidase subunit 1 (662 aa).

The next 2 helical transmembrane spans lie at W14–I34 and I58–I78. Residue H102 participates in Fe(II)-heme a binding. The next 8 membrane-spanning stretches (helical) occupy residues G103–V123, V140–G160, I187–I207, F228–M248, F273–Y293, M311–F331, G336–V356, and M376–L396. Cu cation contacts are provided by H279, Y283, H328, and H329. The segment at residues H279–Y283 is a cross-link (1'-histidyl-3'-tyrosine (His-Tyr)). Residue H414 participates in heme a3 binding. 5 consecutive transmembrane segments (helical) span residues F415–Y435, C451–L471, I493–V513, P587–I604, and V608–F627. H416 lines the Fe(II)-heme a pocket.

It belongs to the heme-copper respiratory oxidase family. Cu cation is required as a cofactor. Requires ferriheme a as cofactor. The cofactor is Heme A3..

Its subcellular location is the cell membrane. It carries out the reaction 2 a quinol + O2 = 2 a quinone + 2 H2O. It functions in the pathway energy metabolism; oxidative phosphorylation. Functionally, catalyzes quinol oxidation with the concomitant reduction of oxygen to water. This chain is Probable quinol oxidase subunit 1 (qoxB), found in Staphylococcus aureus (strain MRSA252).